The following is a 177-amino-acid chain: Secretion monitor (177 aa).

Positions 1-37 (MIGILNRWRQFGRRYFWPHLLLGMVAASLGVPLNLSG) are cleaved as a signal peptide.

Belongs to the SecM family.

It is found in the cytoplasm. The protein resides in the cytosol. Its subcellular location is the periplasm. Its function is as follows. Regulates secA expression by translational coupling of the secM secA operon. Translational pausing at a specific Pro residue 5 residues before the end of the protein may allow disruption of a mRNA repressor helix that normally suppresses secA translation initiation. The chain is Secretion monitor from Yersinia pestis bv. Antiqua (strain Antiqua).